Reading from the N-terminus, the 1089-residue chain is PALM2-AKAP2 fusion protein (1089 aa).

Positions Ser-70–Ile-107 form a coiled coil. 3 disordered regions span residues Ser-165–His-194, Pro-210–Asn-231, and Pro-289–Gly-362. Residues Ser-173 to Leu-183 show a composition bias toward basic and acidic residues. Phosphoserine is present on residues Arg-315 and Ser-318. The span at Pro-317–Asn-328 shows a compositional bias: basic and acidic residues. The span at Gly-329–Ala-347 shows a compositional bias: polar residues. The residue at position 348 (Ser-348) is a Phosphoserine. Over residues Ser-348–Cys-357 the composition is skewed to low complexity. Residue Lys-370 forms a Glycyl lysine isopeptide (Lys-Gly) (interchain with G-Cter in SUMO1); alternate linkage. Lys-370 is covalently cross-linked (Glycyl lysine isopeptide (Lys-Gly) (interchain with G-Cter in SUMO2); alternate). The tract at residues Lys-429–Pro-517 is disordered. Residues Leu-455 to Gln-470 are compositionally biased toward basic and acidic residues. The span at Gln-471–Leu-508 shows a compositional bias: low complexity. Ser-553 carries the post-translational modification Phosphoserine. The segment at Thr-592 to Leu-644 is disordered. Phosphoserine occurs at positions 678, 682, and 734. Residues Phe-712–Pro-749 show a composition bias toward polar residues. Disordered stretches follow at residues Phe-712–Glu-783, Glu-800–Lys-899, and Thr-915–Thr-934. Thr-743 carries the phosphothreonine modification. The PKA-RII subunit binding domain stretch occupies residues Leu-782 to Gln-795. Over residues Gln-801–Ser-814 the composition is skewed to basic and acidic residues. Residue Ser-847 is modified to Phosphoserine. Residues Gln-850 to Gly-871 are compositionally biased toward basic and acidic residues. The stretch at Arg-928 to Val-958 forms a coiled coil. Phosphoserine is present on residues Ser-936, Ser-964, Ser-995, and Ser-1002. The interval Gln-946–Leu-1021 is disordered.

As to expression, highly expressed in lung and weakly in thymus and cerebellum. Little or no expression in liver, heart and cerebral cortex. All isoforms are expressed in lung, but KL2A and KL2B isoforms are the principal isoforms in cerebellum.

It is found in the apical cell membrane. Binds to regulatory subunit (RII) of protein kinase A. May be involved in establishing polarity in signaling systems or in integrating PKA-RII isoforms with downstream effectors to capture, amplify and focus diffuse, trans-cellular signals carried by cAMP. Binds tp and modulates the structure of the actin cytoskeleton. This is PALM2-AKAP2 fusion protein from Mus musculus (Mouse).